A 324-amino-acid polypeptide reads, in one-letter code: Beta-ketoacyl-[acyl-carrier-protein] synthase III (324 aa).

Active-site residues include Cys-112 and His-251. The segment at Gln-252 to Arg-256 is ACP-binding. Residue Asn-281 is part of the active site.

It belongs to the thiolase-like superfamily. FabH family. In terms of assembly, homodimer.

Its subcellular location is the cytoplasm. The enzyme catalyses malonyl-[ACP] + acetyl-CoA + H(+) = 3-oxobutanoyl-[ACP] + CO2 + CoA. The protein operates within lipid metabolism; fatty acid biosynthesis. Its function is as follows. Catalyzes the condensation reaction of fatty acid synthesis by the addition to an acyl acceptor of two carbons from malonyl-ACP. Catalyzes the first condensation reaction which initiates fatty acid synthesis and may therefore play a role in governing the total rate of fatty acid production. Possesses both acetoacetyl-ACP synthase and acetyl transacylase activities. Its substrate specificity determines the biosynthesis of branched-chain and/or straight-chain of fatty acids. The protein is Beta-ketoacyl-[acyl-carrier-protein] synthase III of Clostridium perfringens (strain ATCC 13124 / DSM 756 / JCM 1290 / NCIMB 6125 / NCTC 8237 / Type A).